The sequence spans 464 residues: F-box/FBD/LRR-repeat protein At1g80470 (464 aa).

The region spanning 15-62 (DWISGLADDLLLQILSKVPTRESVFTSRMSKRWRNLWRHVPALDLDSS) is the F-box domain. 6 LRR repeats span residues 96 to 122 (EEHC…TILS), 123 to 150 (KVNI…TLYS), 152 to 178 (VFDA…KFDG), 197 to 222 (IITH…KLES), 223 to 249 (MRED…SITD), and 273 to 298 (DAED…TISA). The FBD domain occupies 359-413 (KEEINLSLVPHCFESSLEYVQLKVPITVSETSSKMELAIYFVRNCSVLKKLMLNE).

In Arabidopsis thaliana (Mouse-ear cress), this protein is F-box/FBD/LRR-repeat protein At1g80470.